The following is a 100-amino-acid chain: Urease subunit gamma (100 aa).

It belongs to the urease gamma subunit family. Heterotrimer of UreA (gamma), UreB (beta) and UreC (alpha) subunits. Three heterotrimers associate to form the active enzyme.

It is found in the cytoplasm. The catalysed reaction is urea + 2 H2O + H(+) = hydrogencarbonate + 2 NH4(+). Its pathway is nitrogen metabolism; urea degradation; CO(2) and NH(3) from urea (urease route): step 1/1. In Laribacter hongkongensis (strain HLHK9), this protein is Urease subunit gamma.